The following is a 315-amino-acid chain: MSYFKTAMLLAGLTALFMGIGYLIGGASGALIALVVAAAMNVFTYWNSDRMVLSMYGAQEVDVRSAPDLVRMVAELAGRAGLPMPRVFIMDNPQPNAFATGRNPENAAVAVTTGLMQQLSREELAGVIAHELAHVKNHDTLLMTITATIAGAISMVAQFGMFFGGNRENNNGPGLIGSLALMILAPLGAMLVQMAISRTREYAADEMGARICGQPMWLASALGRIDAAAHQVPNVEAERAPATAHMFIINPLSGQGMDNLFATHPSTQNRIAALQRLTGEIGGGGASIGRPAGPSPRGAPRSPWSGQPRARGPWG.

Residues 16-36 (LFMGIGYLIGGASGALIALVV) form a helical membrane-spanning segment. His130 contributes to the Zn(2+) binding site. Residue Glu131 is part of the active site. His134 is a binding site for Zn(2+). The next 2 helical transmembrane spans lie at 145–165 (ITATIAGAISMVAQFGMFFGG) and 172–192 (GPGLIGSLALMILAPLGAMLV). Glu201 serves as a coordination point for Zn(2+). The disordered stretch occupies residues 282–315 (GGGGASIGRPAGPSPRGAPRSPWSGQPRARGPWG). The span at 288 to 303 (IGRPAGPSPRGAPRSP) shows a compositional bias: low complexity.

This sequence belongs to the peptidase M48B family. The cofactor is Zn(2+).

The protein localises to the cell inner membrane. This is Protease HtpX homolog from Rhodopseudomonas palustris (strain BisB5).